The sequence spans 302 residues: Melibiose operon regulatory protein (302 aa).

One can recognise an HTH araC/xylS-type domain in the interval 194–292 (SQMLGFIAEN…GMSPQQYRKL (99 aa)). 2 consecutive DNA-binding regions (H-T-H motif) follow at residues 211–232 (NDVA…QRVM) and 259–282 (ILDI…GKYV).

Its function is as follows. Transcription activator for the expression of the melAB operon. MelR binds at two sites located upstream of the melAB transcription site. This chain is Melibiose operon regulatory protein (melR), found in Escherichia coli O6:H1 (strain CFT073 / ATCC 700928 / UPEC).